Consider the following 145-residue polypeptide: Superoxide dismutase [Mn/Fe] (145 aa).

Residues histidine 10 and histidine 64 each coordinate Fe(3+). 2 residues coordinate Mn(2+): histidine 10 and histidine 64. The tract at residues 126–145 (TSTANQDTPISEGKKPILGL) is disordered.

The protein belongs to the iron/manganese superoxide dismutase family. Mn(2+) is required as a cofactor. The cofactor is Fe(3+).

It carries out the reaction 2 superoxide + 2 H(+) = H2O2 + O2. In terms of biological role, destroys superoxide anion radicals which are normally produced within the cells and which are toxic to biological systems. Catalyzes the dismutation of superoxide anion radicals into O2 and H2O2 by successive reduction and oxidation of the transition metal ion at the active site. The polypeptide is Superoxide dismutase [Mn/Fe] (sodA) (Streptococcus mitis).